A 386-amino-acid chain; its full sequence is Phosphate acyltransferase (386 aa).

Residues 359-386 are disordered; sequence PHRARQDELGENKVVGADQSMTAKATGT. The segment covering 377-386 has biased composition (polar residues); the sequence is QSMTAKATGT.

Belongs to the PlsX family. Homodimer. Probably interacts with PlsY.

The protein localises to the cytoplasm. It carries out the reaction a fatty acyl-[ACP] + phosphate = an acyl phosphate + holo-[ACP]. It functions in the pathway lipid metabolism; phospholipid metabolism. Its function is as follows. Catalyzes the reversible formation of acyl-phosphate (acyl-PO(4)) from acyl-[acyl-carrier-protein] (acyl-ACP). This enzyme utilizes acyl-ACP as fatty acyl donor, but not acyl-CoA. The sequence is that of Phosphate acyltransferase from Beijerinckia indica subsp. indica (strain ATCC 9039 / DSM 1715 / NCIMB 8712).